The sequence spans 210 residues: N-(5'-phosphoribosyl)anthranilate isomerase (210 aa).

The protein belongs to the TrpF family.

The enzyme catalyses N-(5-phospho-beta-D-ribosyl)anthranilate = 1-(2-carboxyphenylamino)-1-deoxy-D-ribulose 5-phosphate. It functions in the pathway amino-acid biosynthesis; L-tryptophan biosynthesis; L-tryptophan from chorismate: step 3/5. This is N-(5'-phosphoribosyl)anthranilate isomerase from Pseudomonas fluorescens (strain ATCC BAA-477 / NRRL B-23932 / Pf-5).